A 506-amino-acid polypeptide reads, in one-letter code: 26S proteasome non-ATPase regulatory subunit 5 (506 aa).

This sequence belongs to the proteasome subunit S5B/HSM3 family. As to quaternary structure, interacts with PI31; this interaction is increased by PI31 ADP-ribosylation. Interacts with Rpt2.

Acts as a chaperone during the assembly of the 26S proteasome. This chain is 26S proteasome non-ATPase regulatory subunit 5, found in Drosophila melanogaster (Fruit fly).